Consider the following 544-residue polypeptide: Serine/threonine-protein kinase bur1 (544 aa).

Residues 25-326 (FEFLGKLGEG…AIDALKHPYF (302 aa)) enclose the Protein kinase domain. ATP is bound by residues 31–39 (LGEGTFGEV) and Lys-54. Asp-155 functions as the Proton acceptor in the catalytic mechanism. The disordered stretch occupies residues 357–544 (AAMPPAPAGG…ERVDRGPYRR (188 aa)). The span at 374–403 (GGWSTNSGSRTGAETRNPRISSAARSQGNQ) shows a compositional bias: polar residues. Composition is skewed to basic and acidic residues over residues 419–438 (RGNEELKDPNHSFSSRHRDG), 456–466 (HSDKTGRDRGY), 488–511 (DRNRDRDQGTAISDRRGSYYDKSH), and 532–544 (NYRERVDRGPYRR).

The protein belongs to the protein kinase superfamily. CMGC Ser/Thr protein kinase family. CDC2/CDKX subfamily.

Its subcellular location is the nucleus. It catalyses the reaction L-seryl-[protein] + ATP = O-phospho-L-seryl-[protein] + ADP + H(+). The catalysed reaction is L-threonyl-[protein] + ATP = O-phospho-L-threonyl-[protein] + ADP + H(+). It carries out the reaction [DNA-directed RNA polymerase] + ATP = phospho-[DNA-directed RNA polymerase] + ADP + H(+). In terms of biological role, serine/threonine-protein kinase involved in transcription regulation. Phosphorylates the UBC2/RAD6 ubiquitin-conjugating enzyme (E2), leading to monoubiquitination of histone H2B and the silencing of telomeric-associated genes. Also required for histone H3 methylation. Necessary for the recovery from pheromone-induced growth arrest in the cell cycle G1 phase. The polypeptide is Serine/threonine-protein kinase bur1 (ptkA) (Emericella nidulans (strain FGSC A4 / ATCC 38163 / CBS 112.46 / NRRL 194 / M139) (Aspergillus nidulans)).